The primary structure comprises 847 residues: DNA mismatch repair protein MutS (847 aa).

602–609 (GPNMSGKS) contacts ATP. The tract at residues 788–807 (EKREASLPASRTDSQKVSEQ) is disordered. Residues 796-807 (ASRTDSQKVSEQ) are compositionally biased toward polar residues.

The protein belongs to the DNA mismatch repair MutS family.

This protein is involved in the repair of mismatches in DNA. It is possible that it carries out the mismatch recognition step. This protein has a weak ATPase activity. The chain is DNA mismatch repair protein MutS from Streptococcus gordonii (strain Challis / ATCC 35105 / BCRC 15272 / CH1 / DL1 / V288).